A 185-amino-acid chain; its full sequence is MISVNDFRTGLTIAVDNGLWQVLDFQHVKPGKGAAFVRSKLRNLRTGSVQEKTFRAGEKVEKAHIENRRMQYLYASGESHVFMDNGTYEQIELGEKQIERELKFLKENMEVSIMTYQGEVLGVELPNTVELQVTETEPGIKGDTASNVTKPATLETGLVVQVPIFINEGETLIINTGEGKYVSRA.

This sequence belongs to the elongation factor P family.

It localises to the cytoplasm. Its pathway is protein biosynthesis; polypeptide chain elongation. Involved in peptide bond synthesis. Stimulates efficient translation and peptide-bond synthesis on native or reconstituted 70S ribosomes in vitro. Probably functions indirectly by altering the affinity of the ribosome for aminoacyl-tRNA, thus increasing their reactivity as acceptors for peptidyl transferase. This is Elongation factor P from Bacillus cereus (strain ATCC 10987 / NRS 248).